The chain runs to 988 residues: UvrABC system protein A (988 aa).

Residue 33 to 40 coordinates ATP; the sequence is GLSGSGKS. Residues 255-282 form a C4-type zinc finger; that stretch reads CPVCDYSLPELEPRLFSFNAPVGACPSC. 2 consecutive ABC transporter domains span residues 312 to 589 and 609 to 938; these read WDRR…PRSL and PNPK…QFLA. 642-649 serves as a coordination point for ATP; it reads GVSGSGKS. Residues 741–767 form a C4-type zinc finger; the sequence is CEACQGDGMIKVEMHFLPDVYVPCDVC. The segment at 948–988 is disordered; the sequence is ETRPAAMANKPDARPPRKVKPEKVAKATKTATKKTAKKKAS. Positions 958–972 are enriched in basic and acidic residues; sequence PDARPPRKVKPEKVA. The segment covering 978 to 988 has biased composition (basic residues); the sequence is ATKKTAKKKAS.

The protein belongs to the ABC transporter superfamily. UvrA family. In terms of assembly, forms a heterotetramer with UvrB during the search for lesions.

The protein localises to the cytoplasm. In terms of biological role, the UvrABC repair system catalyzes the recognition and processing of DNA lesions. UvrA is an ATPase and a DNA-binding protein. A damage recognition complex composed of 2 UvrA and 2 UvrB subunits scans DNA for abnormalities. When the presence of a lesion has been verified by UvrB, the UvrA molecules dissociate. This is UvrABC system protein A from Xanthomonas campestris pv. campestris (strain ATCC 33913 / DSM 3586 / NCPPB 528 / LMG 568 / P 25).